The sequence spans 303 residues: Putative S-adenosyl-L-methionine-dependent methyltransferase ML2020 (303 aa).

S-adenosyl-L-methionine-binding positions include D130 and 159 to 160 (DL).

The protein belongs to the UPF0677 family.

Functionally, exhibits S-adenosyl-L-methionine-dependent methyltransferase activity. This chain is Putative S-adenosyl-L-methionine-dependent methyltransferase ML2020, found in Mycobacterium leprae (strain TN).